The primary structure comprises 133 residues: Probable mitochondrial pyruvate carrier 2 (133 aa).

The next 3 membrane-spanning stretches (helical) occupy residues 40 to 57, 73 to 91, and 100 to 116; these read VFFW…AGLA, ALFA…ITPI, and FFVM…IAHY.

The protein belongs to the mitochondrial pyruvate carrier (MPC) (TC 2.A.105) family.

Its subcellular location is the mitochondrion inner membrane. Its function is as follows. May mediate the uptake of pyruvate into mitochondria. This chain is Probable mitochondrial pyruvate carrier 2, found in Caenorhabditis elegans.